We begin with the raw amino-acid sequence, 429 residues long: 3-phosphoshikimate 1-carboxyvinyltransferase (429 aa).

3-phosphoshikimate-binding residues include Lys-23, Ser-24, and Arg-28. Lys-23 is a binding site for phosphoenolpyruvate. The phosphoenolpyruvate site is built by Gly-95 and Arg-123. The 3-phosphoshikimate site is built by Ser-168, Gln-170, Asp-316, and Lys-343. Residue Gln-170 coordinates phosphoenolpyruvate. The active-site Proton acceptor is Asp-316. Residues Arg-347 and Arg-389 each coordinate phosphoenolpyruvate.

The protein belongs to the EPSP synthase family. Monomer.

It localises to the cytoplasm. It catalyses the reaction 3-phosphoshikimate + phosphoenolpyruvate = 5-O-(1-carboxyvinyl)-3-phosphoshikimate + phosphate. Its pathway is metabolic intermediate biosynthesis; chorismate biosynthesis; chorismate from D-erythrose 4-phosphate and phosphoenolpyruvate: step 6/7. In terms of biological role, catalyzes the transfer of the enolpyruvyl moiety of phosphoenolpyruvate (PEP) to the 5-hydroxyl of shikimate-3-phosphate (S3P) to produce enolpyruvyl shikimate-3-phosphate and inorganic phosphate. The chain is 3-phosphoshikimate 1-carboxyvinyltransferase from Bacillus anthracis (strain A0248).